Here is a 395-residue protein sequence, read N- to C-terminus: Synaptotagmin-8 (395 aa).

At 1–44 the chain is on the extracellular side; that stretch reads MQADRSMKMGHALNPFSTSAPLDATAGPSLIPDLITRIPWPRWT. A helical; Signal-anchor for type III membrane protein membrane pass occupies residues 45–65; that stretch reads LFIAILAAGVLLVSCLLCVIC. The Cytoplasmic portion of the chain corresponds to 66 to 395; it reads CYCHRHRHRK…PRLPLLRPRS (330 aa). 2 C2 domains span residues 113–229 and 241–370; these read QWGR…ESWY and QMGE…AQWH.

It belongs to the synaptotagmin family. As to quaternary structure, homodimer or homooligomer. Homodimerization and homooligomerization do not depend on Ca(2+). Interacts with SYNCRIP isoform 2 C-terminus. Binds inositol 1,3,4,5-tetrakisphosphate (IP4). Binds to AP2 in a Ca(2+)-independent manner. Interacts with STX1A, STX1B and STX2; the interaction is Ca(2+)-dependent. In terms of tissue distribution, ubiquitous. Detected in testis and brain. Expressed in primary neurons, neuroendocrine and endocrine cells.

The protein localises to the cytoplasm. Its subcellular location is the cell membrane. It localises to the cytoplasmic vesicle. The protein resides in the secretory vesicle. It is found in the acrosome. Functionally, involved in the trafficking and exocytosis of secretory vesicles in non-neuronal tissues. Mediates Ca(2+)-regulation of exocytosis acrosomal reaction in sperm. May mediate Ca(2+)-regulation of exocytosis in insulin secreted cells. In Mus musculus (Mouse), this protein is Synaptotagmin-8 (Syt8).